The chain runs to 290 residues: MLARFPLYLRLVRMDKPIGSLLLLWPTLNALWIASDGRPRWPLVAIFALGTLLMRSAGCAMNDYADRDFDRHVKRTADRPLTSGKIRAWEAVAIAAVLSFVAFLLILPLNTLTKELSVVALFVAGSYPFMKRFFAIPQAYLGIAFGFGIPMAFAAVQGTVPALAWVMLVANVFWSVAYDTEYAMVDRDDDIKIGIRTSALTFGRFDVAAIMLCYAVTLGIYAWIGATLGFGLAFWAGWAAALGCALYHYTLIKDRERMPCFAAFRHNNWLGGVLFAGIAAHYLVAGAAGN.

6 helical membrane passes run tryptophan 41–methionine 61, tryptophan 89–leucine 109, phenylalanine 133–phenylalanine 153, glycine 158–tyrosine 178, phenylalanine 202–isoleucine 224, and tryptophan 269–glycine 289.

The protein belongs to the UbiA prenyltransferase family. It depends on Mg(2+) as a cofactor.

Its subcellular location is the cell inner membrane. The catalysed reaction is all-trans-octaprenyl diphosphate + 4-hydroxybenzoate = 4-hydroxy-3-(all-trans-octaprenyl)benzoate + diphosphate. It functions in the pathway cofactor biosynthesis; ubiquinone biosynthesis. Catalyzes the prenylation of para-hydroxybenzoate (PHB) with an all-trans polyprenyl group. Mediates the second step in the final reaction sequence of ubiquinone-8 (UQ-8) biosynthesis, which is the condensation of the polyisoprenoid side chain with PHB, generating the first membrane-bound Q intermediate 3-octaprenyl-4-hydroxybenzoate. The protein is 4-hydroxybenzoate octaprenyltransferase of Burkholderia vietnamiensis (strain G4 / LMG 22486) (Burkholderia cepacia (strain R1808)).